The following is a 208-amino-acid chain: Imidazole glycerol phosphate synthase subunit HisH (208 aa).

The Glutamine amidotransferase type-1 domain occupies 1 to 206 (MIVIIDYDTG…KEVIRSCKSS (206 aa)). The active-site Nucleophile is Cys79. Active-site residues include His181 and Glu183.

As to quaternary structure, heterodimer of HisH and HisF.

Its subcellular location is the cytoplasm. It carries out the reaction 5-[(5-phospho-1-deoxy-D-ribulos-1-ylimino)methylamino]-1-(5-phospho-beta-D-ribosyl)imidazole-4-carboxamide + L-glutamine = D-erythro-1-(imidazol-4-yl)glycerol 3-phosphate + 5-amino-1-(5-phospho-beta-D-ribosyl)imidazole-4-carboxamide + L-glutamate + H(+). It catalyses the reaction L-glutamine + H2O = L-glutamate + NH4(+). The protein operates within amino-acid biosynthesis; L-histidine biosynthesis; L-histidine from 5-phospho-alpha-D-ribose 1-diphosphate: step 5/9. Functionally, IGPS catalyzes the conversion of PRFAR and glutamine to IGP, AICAR and glutamate. The HisH subunit catalyzes the hydrolysis of glutamine to glutamate and ammonia as part of the synthesis of IGP and AICAR. The resulting ammonia molecule is channeled to the active site of HisF. The protein is Imidazole glycerol phosphate synthase subunit HisH of Listeria monocytogenes serotype 4b (strain CLIP80459).